A 116-amino-acid chain; its full sequence is Non-specific lipid transfer protein GPI-anchored 17 (116 aa).

The first 24 residues, 1-24 (MKIGVVLVLLTVFVVVMSSTSVSA), serve as a signal peptide directing secretion. 3 disulfides stabilise this stretch: Cys-31/Cys-74, Cys-42/Cys-58, and Cys-59/Cys-99. Asn-107 carries GPI-anchor amidated asparagine lipidation. Residues 108-116 (GKNFKNTSL) constitute a propeptide, removed in mature form. Residue Asn-113 is glycosylated (N-linked (GlcNAc...) asparagine).

It belongs to the plant LTP family. Expressed in seedlings, preferentially in roots.

It localises to the cell membrane. Probable lipid transfer protein. This is Non-specific lipid transfer protein GPI-anchored 17 from Arabidopsis thaliana (Mouse-ear cress).